Consider the following 483-residue polypeptide: Glutamyl-tRNA(Gln) amidotransferase subunit A (483 aa).

Active-site charge relay system residues include K77 and S152. S176 functions as the Acyl-ester intermediate in the catalytic mechanism.

This sequence belongs to the amidase family. GatA subfamily. In terms of assembly, heterotrimer of A, B and C subunits.

It carries out the reaction L-glutamyl-tRNA(Gln) + L-glutamine + ATP + H2O = L-glutaminyl-tRNA(Gln) + L-glutamate + ADP + phosphate + H(+). Its function is as follows. Allows the formation of correctly charged Gln-tRNA(Gln) through the transamidation of misacylated Glu-tRNA(Gln) in organisms which lack glutaminyl-tRNA synthetase. The reaction takes place in the presence of glutamine and ATP through an activated gamma-phospho-Glu-tRNA(Gln). This is Glutamyl-tRNA(Gln) amidotransferase subunit A from Listeria innocua serovar 6a (strain ATCC BAA-680 / CLIP 11262).